The sequence spans 1558 residues: ABC transporter NFT1 (1558 aa).

At 1–29 the chain is on the extracellular side; it reads MIKNGTCPYWERDDLSECARREYIEFKFP. An N-linked (GlcNAc...) asparagine glycan is attached at Asn4. A helical membrane pass occupies residues 30-50; it reads LFILLTGMIYAFCKVFRAFYL. At 51–103 the chain is on the cytoplasmic side; it reads RGKNHTNEAPEFEEQGNGNHEYARFSVLRLKSAWESRSFCNVNNRSTFDKFKK. A helical transmembrane segment spans residues 104–124; sequence FIEGAFIVLQLTIHLYILSSM. Residues 125–130 are Extracellular-facing; that stretch reads PMDNKK. Residues 131–151 form a helical membrane-spanning segment; that stretch reads FFHQGFLVQMFLWILLLVVIT. The Cytoplasmic portion of the chain corresponds to 152–169; it reads LRLISASQSFRWVLACKR. A helical transmembrane segment spans residues 170–190; the sequence is DLWAVSFYSYASLFTLSILPL. Topologically, residues 191 to 201 are extracellular; it reads RSVFIGKIKDK. A helical transmembrane segment spans residues 202-222; the sequence is IMVKYIISETFIDLALLLLLS. Topologically, residues 223–302 are cytoplasmic; sequence TSSIEGTRYS…SSKKGRLLPN (80 aa). A helical transmembrane segment spans residues 303-323; it reads IICYFKAVFISQLFLAFVSSF. An ABC transmembrane type-1 1 domain is found at 311 to 621; the sequence is FISQLFLAFV…IASTVSLLIQ (311 aa). Residues 324–351 are Extracellular-facing; that stretch reads LNFVPSLLMPRILSYVNDPKSKSWNLVS. A helical membrane pass occupies residues 352–374; it reads LYVSSMLVSKIIATTCRGQGLFL. Residues 375–449 are Cytoplasmic-facing; sequence GEKGTMQLRT…VMSIDAFKVS (75 aa). The segment at 410–434 is disordered; that stretch reads NASTSFEENPDSSEAEPRKKSSRKD. Residues 424–434 are compositionally biased toward basic and acidic residues; sequence AEPRKKSSRKD. The helical transmembrane segment at 450-470 threads the bilayer; it reads EAMNTFYLACEAVFMTVTALM. The Extracellular segment spans residues 471 to 481; that stretch reads ILYSLLGWSAF. A helical membrane pass occupies residues 482–504; it reads AGTFALLAMIPLNFWCATFYGNY. Residues 505–558 are Cytoplasmic-facing; it reads QADQLILTDKRTSGISEALNSIRVIKLLAWENLFYQKIINVRDGEIRLLKKKAT. Residues 559–579 traverse the membrane as a helical segment; that stretch reads IFFLNHLIWFFGPTLVSAITF. Residues 580–584 lie on the Extracellular side of the membrane; the sequence is SVFIK. A helical transmembrane segment spans residues 585–605; it reads FQNQTLTPTIAFTALSLFAIL. The Cytoplasmic portion of the chain corresponds to 606–953; it reads RTPMDQIAST…KFSAYKWLAD (348 aa). An ABC transporter 1 domain is found at 651–892; that stretch reads FGFEDASMEW…NEFLRESINN (242 aa). Position 686–693 (686–693) interacts with ATP; the sequence is GPTGSGKS. Residues 892–901 show a composition bias toward polar residues; it reads NDSKNTTHNQ. The disordered stretch occupies residues 892 to 926; it reads NDSKNTTHNQIDLKRSTTSKKTKNGDPEGGNSQDE. Residues 954-974 form a helical membrane-spanning segment; it reads YFGGLGVVFVFTSSSILIHGI. The region spanning 961 to 1251 is the ABC transmembrane type-1 2 domain; the sequence is VFVFTSSSIL…IIKVFSSVEL (291 aa). The Extracellular portion of the chain corresponds to 975 to 1013; the sequence is TLSQGFWLRYWLDTGSSGSKSTWLYRIVEGHSNIYFLLT. The helical transmembrane segment at 1014–1034 threads the bilayer; sequence YIIIGLVSSFLTSGKVWIAII. At 1035–1082 the chain is on the cytoplasmic side; sequence SGTNVTKKIFAKLLSSILYAKLRFHNVTPTGRIMNRFSKDMDIIDQQL. Residues 1083-1105 form a helical membrane-spanning segment; the sequence is IPNFEGLSYSVVVCLWIILLIGY. Topologically, residues 1106–1109 are extracellular; the sequence is VTPQ. A helical membrane pass occupies residues 1110–1132; that stretch reads FLLFAIPLCALYYTVCTLYLRAS. At 1133–1199 the chain is on the cytoplasmic side; that stretch reads RELKRIDNIN…ATEWITYRVD (67 aa). The helical transmembrane segment at 1200–1220 threads the bilayer; it reads IIGTLVLFSSSVMIIMKASYL. Residues 1221 to 1222 lie on the Extracellular side of the membrane; sequence DA. Residues 1223 to 1243 traverse the membrane as a helical segment; the sequence is GLAGILLSNAFSFTETAQWII. Residues 1244–1558 are Cytoplasmic-facing; that stretch reads KVFSSVELLM…LAKVSFDNKR (315 aa). Residues 1285–1538 form the ABC transporter 2 domain; it reads VELKNLSLRY…RNTIFYRLCR (254 aa). Residue 1319-1326 coordinates ATP; that stretch reads GRTGAGKS.

Belongs to the ABC transporter superfamily. ABCC family. Conjugate transporter (TC 3.A.1.208) subfamily.

Its subcellular location is the membrane. The protein is ABC transporter NFT1 (NFT1) of Saccharomyces cerevisiae (Baker's yeast).